Consider the following 275-residue polypeptide: 3-methyl-2-oxobutanoate hydroxymethyltransferase (275 aa).

Mg(2+)-binding residues include aspartate 44 and aspartate 83. Residues 44 to 45 (DS), aspartate 83, and lysine 113 each bind 3-methyl-2-oxobutanoate. Glutamate 115 lines the Mg(2+) pocket. Glutamate 182 acts as the Proton acceptor in catalysis.

It belongs to the PanB family. Homodecamer; pentamer of dimers. It depends on Mg(2+) as a cofactor.

It is found in the cytoplasm. The catalysed reaction is 3-methyl-2-oxobutanoate + (6R)-5,10-methylene-5,6,7,8-tetrahydrofolate + H2O = 2-dehydropantoate + (6S)-5,6,7,8-tetrahydrofolate. It functions in the pathway cofactor biosynthesis; (R)-pantothenate biosynthesis; (R)-pantoate from 3-methyl-2-oxobutanoate: step 1/2. Catalyzes the reversible reaction in which hydroxymethyl group from 5,10-methylenetetrahydrofolate is transferred onto alpha-ketoisovalerate to form ketopantoate. The sequence is that of 3-methyl-2-oxobutanoate hydroxymethyltransferase from Clostridium botulinum (strain Kyoto / Type A2).